We begin with the raw amino-acid sequence, 348 residues long: MNKTDELRTARIGSLITPPSLAAEHPVSPAIADNVTAARKRIACILTGEDHRLLVVIGPCSLHDPKAALEYAERLNALRRRYEDRLEIVMRAYFEKPRTVVGWKGLISDPDLDGSYDVNRGIGIARQLLIDINALGLPTATEFLDMVIGQFIADLISWGAIGARTTESQIHREMASALSCPVGFKNGTDGNVQIAVDAIRAARASHMFLSPDKLGQMTIYQTSGNPHGHVILRGGKQPNYHASDVAAAAESLSAFNLPQQLVIDFSHGNCLKQHRRQMDVAAEVAEQIKAGSQAVAGVMIESFLEEGNQKVVSGEPLVYGKSITDPCLGWQESEKVLALLAEAVSHRL.

This sequence belongs to the class-I DAHP synthase family.

It catalyses the reaction D-erythrose 4-phosphate + phosphoenolpyruvate + H2O = 7-phospho-2-dehydro-3-deoxy-D-arabino-heptonate + phosphate. The protein operates within metabolic intermediate biosynthesis; chorismate biosynthesis; chorismate from D-erythrose 4-phosphate and phosphoenolpyruvate: step 1/7. Stereospecific condensation of phosphoenolpyruvate (PEP) and D-erythrose-4-phosphate (E4P) giving rise to 3-deoxy-D-arabino-heptulosonate-7-phosphate (DAHP). In Enterobacter agglomerans (Erwinia herbicola), this protein is Phospho-2-dehydro-3-deoxyheptonate aldolase, Trp-sensitive (aroH).